The following is a 175-amino-acid chain: Transcription factor E (175 aa).

The 86-residue stretch at 3–88 (ENPLIQQVLF…TWKPSLEKVP (86 aa)) folds into the HTH TFE/IIEalpha-type domain.

The protein belongs to the TFE family. In terms of assembly, monomer. Interaction with RNA polymerase subunits RpoF and RpoE is necessary for Tfe stimulatory transcription activity. Able to interact with Tbp and RNA polymerase in the absence of DNA promoter. Interacts both with the preinitiation and elongation complexes.

Functionally, transcription factor that plays a role in the activation of archaeal genes transcribed by RNA polymerase. Facilitates transcription initiation by enhancing TATA-box recognition by TATA-box-binding protein (Tbp), and transcription factor B (Tfb) and RNA polymerase recruitment. Not absolutely required for transcription in vitro, but particularly important in cases where Tbp or Tfb function is not optimal. It dynamically alters the nucleic acid-binding properties of RNA polymerases by stabilizing the initiation complex and destabilizing elongation complexes. Seems to translocate with the RNA polymerase following initiation and acts by binding to the non template strand of the transcription bubble in elongation complexes. The protein is Transcription factor E of Methanococcus maripaludis (strain C7 / ATCC BAA-1331).